Reading from the N-terminus, the 356-residue chain is Putative KilA-N domain-containing protein R878 (356 aa).

Residues 1–12 (MKVRKSNNKPLK) are compositionally biased toward basic residues. A disordered region spans residues 1–114 (MKVRKSNNKP…DDDGSDNNVY (114 aa)). A compositionally biased stretch (low complexity) spans 14–46 (SASFTSGTKTGSKSAKSVNSGSKSMKSTKSSSK). Residues 66 to 114 (SDNDELSDNEISDNESSDDDEISDNESSDDDEISDNEISDDDGSDNNVY) are compositionally biased toward acidic residues. Positions 130–239 (NYSKGKFGNF…VRIGFCMEEW (110 aa)) constitute a KilA-N domain.

The chain is Putative KilA-N domain-containing protein R878 from Acanthamoeba polyphaga (Amoeba).